Reading from the N-terminus, the 276-residue chain is uncharacterized protein (276 aa).

The next 7 helical transmembrane spans lie at 5 to 25, 32 to 52, 64 to 84, 104 to 124, 149 to 169, 193 to 213, and 244 to 264; these read TDLI…GMLA, PLVG…GFVG, GVIL…LLAV, AGLA…GLAL, IAVG…VLLP, LWVT…VMLV, and VGIA…GAFF.

Belongs to the monovalent cation:proton antiporter 2 (CPA2) transporter (TC 2.A.37) family.

The protein resides in the cell membrane. This is an uncharacterized protein from Methylorubrum extorquens (Methylobacterium dichloromethanicum).